We begin with the raw amino-acid sequence, 214 residues long: Pyridoxine/pyridoxamine 5'-phosphate oxidase (214 aa).

Substrate-binding positions include 8 to 11 (RKSY) and lysine 67. Residues 62-67 (RVVLLK), 77-78 (YT), lysine 84, and glutamine 106 contribute to the FMN site. Substrate is bound by residues tyrosine 124, arginine 128, and serine 132. FMN-binding positions include 141–142 (QS) and tryptophan 186. 192–194 (RLH) contributes to the substrate binding site. Position 196 (arginine 196) interacts with FMN.

The protein belongs to the pyridoxamine 5'-phosphate oxidase family. In terms of assembly, homodimer. FMN serves as cofactor.

The catalysed reaction is pyridoxamine 5'-phosphate + O2 + H2O = pyridoxal 5'-phosphate + H2O2 + NH4(+). The enzyme catalyses pyridoxine 5'-phosphate + O2 = pyridoxal 5'-phosphate + H2O2. Its pathway is cofactor metabolism; pyridoxal 5'-phosphate salvage; pyridoxal 5'-phosphate from pyridoxamine 5'-phosphate: step 1/1. It functions in the pathway cofactor metabolism; pyridoxal 5'-phosphate salvage; pyridoxal 5'-phosphate from pyridoxine 5'-phosphate: step 1/1. In terms of biological role, catalyzes the oxidation of either pyridoxine 5'-phosphate (PNP) or pyridoxamine 5'-phosphate (PMP) into pyridoxal 5'-phosphate (PLP). This Flavobacterium johnsoniae (strain ATCC 17061 / DSM 2064 / JCM 8514 / BCRC 14874 / CCUG 350202 / NBRC 14942 / NCIMB 11054 / UW101) (Cytophaga johnsonae) protein is Pyridoxine/pyridoxamine 5'-phosphate oxidase.